Consider the following 192-residue polypeptide: MTTIRKKLVIVGDGACGKTCLLIVFSKDQFPEVYVPTVFENYVADIEVDGKQVELALWDTAGQEDYDRLRPLSYPDTDVILMCFSVDSPDSLENIPEKWTPEVKHFCPNVPIILVGNKKDLRNDPNTIRDLAKMKQEPVKPQEGRAMAEKINAFAYLECSAKSKEGVRDVFETATRAALQVKKRKKTRCLLL.

12–19 is a binding site for GTP; that stretch reads GDGACGKT. The Effector region motif lies at 34–42; sequence YVPTVFENY. Residues 59 to 63 and 117 to 120 each bind GTP; these read DTAGQ and NKKD. Cys189 carries the post-translational modification Cysteine methyl ester. Residue Cys189 is the site of S-geranylgeranyl cysteine attachment. Positions 190–192 are cleaved as a propeptide — removed in mature form; that stretch reads LLL.

It belongs to the small GTPase superfamily. Rho family. In terms of assembly, interacts with capu. Interacts (via REM repeats) with Pkn (via N-terminus). Interacts (via N-terminus) with wash (via N-terminus). May interact with dia/diaphanous (via CBD/FH3 domain). In terms of tissue distribution, expressed in hemocytes (at protein level).

The protein localises to the cell membrane. The protein resides in the cytoplasm. It is found in the cytoskeleton. It localises to the apical cell membrane. Its subcellular location is the lateral cell membrane. Has a role in regulating actin cytoskeletal organization: required during early development for proper execution of morphogenetic movements of individual cells and groups of cells important for the formation of the embryonic body plan. Plays a role in regulating dorsal closure during embryogenesis. During axis elongation, required for Rho-kinase Rok planar polarity and adherens junction localization as well as for generating a planar polarized distribution of the actin-binding protein Shrm. During embryogenesis, acts upstream of wash to regulate the developmental migration of tail hemocytes anteriorly along the ventral midline. May have a role in eye development. Involved in targeted recruitment of dia/diaphanous to apical membranes of polarized epithelial cells. This Drosophila melanogaster (Fruit fly) protein is Ras-like GTP-binding protein Rho1.